The following is a 114-amino-acid chain: T cell receptor beta variable 6-6 (114 aa).

Residues 1-21 (MSISLLCCAAFPLLWAGPVNA) form the signal peptide. The region spanning 22–114 (GVTQTPKFRI…TSVYFCASSY (93 aa)) is the Ig-like domain. Cysteine 42 and cysteine 110 form a disulfide bridge. Asparagine 84 carries N-linked (GlcNAc...) asparagine glycosylation.

As to quaternary structure, alpha-beta TR is a heterodimer composed of an alpha and beta chain; disulfide-linked. The alpha-beta TR is associated with the transmembrane signaling CD3 coreceptor proteins to form the TR-CD3 (TcR or TCR). The assembly of alpha-beta TR heterodimers with CD3 occurs in the endoplasmic reticulum where a single alpha-beta TR heterodimer associates with one CD3D-CD3E heterodimer, one CD3G-CD3E heterodimer and one CD247 homodimer forming a stable octameric structure. CD3D-CD3E and CD3G-CD3E heterodimers preferentially associate with TR alpha and TR beta chains, respectively. The association of the CD247 homodimer is the last step of TcR assembly in the endoplasmic reticulum and is required for transport to the cell surface.

The protein resides in the cell membrane. In terms of biological role, v region of the variable domain of T cell receptor (TR) beta chain that participates in the antigen recognition. Alpha-beta T cell receptors are antigen specific receptors which are essential to the immune response and are present on the cell surface of T lymphocytes. Recognize peptide-major histocompatibility (MH) (pMH) complexes that are displayed by antigen presenting cells (APC), a prerequisite for efficient T cell adaptive immunity against pathogens. Binding of alpha-beta TR to pMH complex initiates TR-CD3 clustering on the cell surface and intracellular activation of LCK that phosphorylates the ITAM motifs of CD3G, CD3D, CD3E and CD247 enabling the recruitment of ZAP70. In turn ZAP70 phosphorylates LAT, which recruits numerous signaling molecules to form the LAT signalosome. The LAT signalosome propagates signal branching to three major signaling pathways, the calcium, the mitogen-activated protein kinase (MAPK) kinase and the nuclear factor NF-kappa-B (NF-kB) pathways, leading to the mobilization of transcription factors that are critical for gene expression and essential for T cell growth and differentiation. The T cell repertoire is generated in the thymus, by V-(D)-J rearrangement. This repertoire is then shaped by intrathymic selection events to generate a peripheral T cell pool of self-MH restricted, non-autoaggressive T cells. Post-thymic interaction of alpha-beta TR with the pMH complexes shapes TR structural and functional avidity. In Homo sapiens (Human), this protein is T cell receptor beta variable 6-6.